Here is a 388-residue protein sequence, read N- to C-terminus: Protein-glutamate methylesterase/protein-glutamine glutaminase 4 (388 aa).

The 118-residue stretch at 4 to 121 (KVLVVDDSGF…SGDASKIKRL (118 aa)) folds into the Response regulatory domain. Residue D55 is modified to 4-aspartylphosphate. The tract at residues 137-196 (SGASAPASVPQPAKPAAPIPVREPPKPAAPVTRPAEPRAKAPPAKPEPKPEVKAAKSRRT) is disordered. Over residues 148-164 (PAKPAAPIPVREPPKPA) the composition is skewed to pro residues. The CheB-type methylesterase domain maps to 197 to 388 (PRQDYKVVLI…FAPRLIDGVG (192 aa)). Residues S209, H236, and D332 contribute to the active site.

The protein belongs to the CheB family. In terms of processing, phosphorylated by CheA. Phosphorylation of the N-terminal regulatory domain activates the methylesterase activity.

It localises to the cytoplasm. The enzyme catalyses [protein]-L-glutamate 5-O-methyl ester + H2O = L-glutamyl-[protein] + methanol + H(+). It carries out the reaction L-glutaminyl-[protein] + H2O = L-glutamyl-[protein] + NH4(+). In terms of biological role, involved in chemotaxis. Part of a chemotaxis signal transduction system that modulates chemotaxis in response to various stimuli. Catalyzes the demethylation of specific methylglutamate residues introduced into the chemoreceptors (methyl-accepting chemotaxis proteins or MCP) by CheR. Also mediates the irreversible deamidation of specific glutamine residues to glutamic acid. The polypeptide is Protein-glutamate methylesterase/protein-glutamine glutaminase 4 (Hahella chejuensis (strain KCTC 2396)).